A 184-amino-acid polypeptide reads, in one-letter code: UPF0301 protein RHOS4_26140 (184 aa).

It belongs to the UPF0301 (AlgH) family.

This Cereibacter sphaeroides (strain ATCC 17023 / DSM 158 / JCM 6121 / CCUG 31486 / LMG 2827 / NBRC 12203 / NCIMB 8253 / ATH 2.4.1.) (Rhodobacter sphaeroides) protein is UPF0301 protein RHOS4_26140.